The following is a 147-amino-acid chain: Protein J1 homolog (147 aa).

It belongs to the chordopoxvirinae J1 family. Homodimer. Part of a complex composed of A30, G7, F10 kinase, A15, D2, D3, and J1. Interacts with A45.

It is found in the virion. The protein localises to the host cytoplasm. Functionally, late protein which is a part of a large complex required for early virion morphogenesis. This complex participates in the formation of virosomes and the incorporation of virosomal contents into nascent immature virions. J1 protein is required for DNA packaging during immature virions (IV) formation. This is Protein J1 homolog from Sheeppox virus (strain KS-1) (SPPV).